The primary structure comprises 213 residues: Nucleoside triphosphate pyrophosphatase (213 aa).

The Proton acceptor role is filled by Asp79.

This sequence belongs to the Maf family. A divalent metal cation is required as a cofactor.

The protein resides in the cytoplasm. It carries out the reaction a ribonucleoside 5'-triphosphate + H2O = a ribonucleoside 5'-phosphate + diphosphate + H(+). It catalyses the reaction a 2'-deoxyribonucleoside 5'-triphosphate + H2O = a 2'-deoxyribonucleoside 5'-phosphate + diphosphate + H(+). Functionally, nucleoside triphosphate pyrophosphatase. May have a dual role in cell division arrest and in preventing the incorporation of modified nucleotides into cellular nucleic acids. The chain is Nucleoside triphosphate pyrophosphatase from Mycobacterium leprae (strain Br4923).